Here is a 212-residue protein sequence, read N- to C-terminus: ATP-dependent Clp protease proteolytic subunit (212 aa).

Residue Ser-114 is the Nucleophile of the active site. His-139 is a catalytic residue.

The protein belongs to the peptidase S14 family. As to quaternary structure, fourteen ClpP subunits assemble into 2 heptameric rings which stack back to back to give a disk-like structure with a central cavity, resembling the structure of eukaryotic proteasomes.

The protein resides in the cytoplasm. The catalysed reaction is Hydrolysis of proteins to small peptides in the presence of ATP and magnesium. alpha-casein is the usual test substrate. In the absence of ATP, only oligopeptides shorter than five residues are hydrolyzed (such as succinyl-Leu-Tyr-|-NHMec, and Leu-Tyr-Leu-|-Tyr-Trp, in which cleavage of the -Tyr-|-Leu- and -Tyr-|-Trp bonds also occurs).. Its function is as follows. Cleaves peptides in various proteins in a process that requires ATP hydrolysis. Has a chymotrypsin-like activity. Plays a major role in the degradation of misfolded proteins. The polypeptide is ATP-dependent Clp protease proteolytic subunit (Aromatoleum aromaticum (strain DSM 19018 / LMG 30748 / EbN1) (Azoarcus sp. (strain EbN1))).